A 212-amino-acid polypeptide reads, in one-letter code: Glycerol-3-phosphate acyltransferase (212 aa).

Transmembrane regions (helical) follow at residues 3-23 (ILLA…VVVS), 51-71 (KAAI…VWLA), 78-98 (DVAV…PVFF), 115-135 (AVHP…AFFF), and 139-159 (SLAA…LFGT).

It belongs to the PlsY family. As to quaternary structure, probably interacts with PlsX.

The protein resides in the cell inner membrane. The enzyme catalyses an acyl phosphate + sn-glycerol 3-phosphate = a 1-acyl-sn-glycero-3-phosphate + phosphate. It participates in lipid metabolism; phospholipid metabolism. Catalyzes the transfer of an acyl group from acyl-phosphate (acyl-PO(4)) to glycerol-3-phosphate (G3P) to form lysophosphatidic acid (LPA). This enzyme utilizes acyl-phosphate as fatty acyl donor, but not acyl-CoA or acyl-ACP. This is Glycerol-3-phosphate acyltransferase from Burkholderia ambifaria (strain MC40-6).